The primary structure comprises 968 residues: RNA polymerase-associated protein RapA (968 aa).

Positions 163-332 constitute a Helicase ATP-binding domain; it reads EVGRRYAPRV…FARLRLLDPD (170 aa). 176–183 is a binding site for ATP; that stretch reads DEVGLGKT. The DEAH box motif lies at 278–281; sequence DEAH. In terms of domain architecture, Helicase C-terminal spans 491-641; sequence RVDWLIEFLK…AFELTCPSGH (151 aa).

Belongs to the SNF2/RAD54 helicase family. RapA subfamily. As to quaternary structure, interacts with the RNAP. Has a higher affinity for the core RNAP than for the holoenzyme. Its ATPase activity is stimulated by binding to RNAP.

In terms of biological role, transcription regulator that activates transcription by stimulating RNA polymerase (RNAP) recycling in case of stress conditions such as supercoiled DNA or high salt concentrations. Probably acts by releasing the RNAP, when it is trapped or immobilized on tightly supercoiled DNA. Does not activate transcription on linear DNA. Probably not involved in DNA repair. The polypeptide is RNA polymerase-associated protein RapA (Shewanella baltica (strain OS185)).